The following is a 510-amino-acid chain: Zinc finger protein 692 (510 aa).

2 disordered regions span residues 1–20 (MAAS…RQLD) and 121–306 (WGPS…EDTA). Residue serine 161 is modified to Phosphoserine. Basic and acidic residues predominate over residues 163–172 (CDERAQEARM). Residues 188 to 201 (EDGEEEEEDEEEML) are compositionally biased toward acidic residues. Serine 225 is modified (phosphoserine). The span at 237–265 (APAPAAVPAPLASPSSSASSLGSGAPGPV) shows a compositional bias: low complexity. The span at 278–297 (QADQQTEPLASPGSQAQSAL) shows a compositional bias: polar residues. C2H2-type zinc fingers lie at residues 322–347 (LPCD…KYQH), 353–377 (FSCP…VKLH), 383–405 (YICE…RRIH), 411–433 (LQCE…RRKH), and 442–465 (FPCE…SKSH). A Phosphoserine modification is found at serine 464.

This sequence belongs to the krueppel C2H2-type zinc-finger protein family. Phosphorylation at Ser-464 results in loss of DNA-binding activity.

The protein localises to the nucleus. In terms of biological role, may act as an transcriptional repressor for PCK1 gene expression, in turn may participate in the hepatic gluconeogenesis regulation through the activated AMPK signaling pathway. This Bos taurus (Bovine) protein is Zinc finger protein 692.